Reading from the N-terminus, the 371-residue chain is Putative 8-amino-7-oxononanoate synthase (371 aa).

Arginine 21 contributes to the substrate binding site. 108–109 contributes to the pyridoxal 5'-phosphate binding site; that stretch reads GY. Histidine 133 contributes to the substrate binding site. Pyridoxal 5'-phosphate-binding positions include serine 180, 205-208, and 234-237; these read DDAH and TLSK. N6-(pyridoxal phosphate)lysine is present on lysine 237. A substrate-binding site is contributed by threonine 333.

It belongs to the class-II pyridoxal-phosphate-dependent aminotransferase family. BioF subfamily. In terms of assembly, homodimer. It depends on pyridoxal 5'-phosphate as a cofactor.

The enzyme catalyses 6-carboxyhexanoyl-[ACP] + L-alanine + H(+) = (8S)-8-amino-7-oxononanoate + holo-[ACP] + CO2. The protein operates within cofactor biosynthesis; biotin biosynthesis. Its function is as follows. Catalyzes the decarboxylative condensation of pimeloyl-[acyl-carrier protein] and L-alanine to produce 8-amino-7-oxononanoate (AON), [acyl-carrier protein], and carbon dioxide. This Bacillus subtilis subsp. natto protein is Putative 8-amino-7-oxononanoate synthase (bioF).